Here is a 1351-residue protein sequence, read N- to C-terminus: D-lysergyl-peptide-synthetase subunit 2 (1351 aa).

The interval 285 to 684 (RCLSQPTASA…GRKDTQVKLR (400 aa)) is adenylation (A) domain. One can recognise a Carrier domain in the interval 828–904 (APQTTTEKLL…ALACVVRSGK (77 aa)). Serine 865 is subject to O-(pantetheine 4'-phosphoryl)serine. The interval 941-1340 (EDVYPCTPLQ…LIRDILAVPQ (400 aa)) is condensation (C) domain.

It belongs to the NRP synthetase family.

Its pathway is alkaloid biosynthesis; ergot alkaloid biosynthesis. Functionally, D-lysergyl-peptide-synthetase subunit 2; part of the gene cluster that mediates the biosynthesis of fungal ergot alkaloid ergovaline, the predominant ergopeptine product in E.festucae var. lolii. DmaW catalyzes the first step of ergot alkaloid biosynthesis by condensing dimethylallyl diphosphate (DMAP) and tryptophan to form 4-dimethylallyl-L-tryptophan. The second step is catalyzed by the methyltransferase easF that methylates 4-dimethylallyl-L-tryptophan in the presence of S-adenosyl-L-methionine, resulting in the formation of 4-dimethylallyl-L-abrine. The catalase easC and the FAD-dependent oxidoreductase easE then transform 4-dimethylallyl-L-abrine to chanoclavine-I which is further oxidized by easD in the presence of NAD(+), resulting in the formation of chanoclavine-I aldehyde. Agroclavine dehydrogenase easG then mediates the conversion of chanoclavine-I aldehyde to agroclavine via a non-enzymatic adduct reaction: the substrate is an iminium intermediate that is formed spontaneously from chanoclavine-I aldehyde in the presence of glutathione. The presence of easA is not required to complete this reaction. Further conversion of agroclavine to paspalic acid is a two-step process involving oxidation of agroclavine to elymoclavine and of elymoclavine to paspalic acid, the second step being performed by the elymoclavine oxidase cloA. Paspalic acid is then further converted to D-lysergic acid. Ergovaline is assembled from D-lysergic acid and three different amino acids by the D-lysergyl-peptide-synthetase composed of a monomudular (lpsB) and a trimodular (lpsA) nonribosomal peptide synthetase subunit. This is D-lysergyl-peptide-synthetase subunit 2 from Epichloe festucae var. lolii (Neotyphodium lolii).